The sequence spans 369 residues: DNA replication and repair protein RecF (369 aa).

30 to 37 (GDNAQGKT) lines the ATP pocket.

It belongs to the RecF family.

Its subcellular location is the cytoplasm. Its function is as follows. The RecF protein is involved in DNA metabolism; it is required for DNA replication and normal SOS inducibility. RecF binds preferentially to single-stranded, linear DNA. It also seems to bind ATP. The sequence is that of DNA replication and repair protein RecF from Streptococcus equi subsp. equi (strain 4047).